The primary structure comprises 209 residues: Segregation and condensation protein B (209 aa).

Belongs to the ScpB family. Homodimer. Homodimerization may be required to stabilize the binding of ScpA to the Smc head domains. Component of a cohesin-like complex composed of ScpA, ScpB and the Smc homodimer, in which ScpA and ScpB bind to the head domain of Smc. The presence of the three proteins is required for the association of the complex with DNA.

It localises to the cytoplasm. Its function is as follows. Participates in chromosomal partition during cell division. May act via the formation of a condensin-like complex containing Smc and ScpA that pull DNA away from mid-cell into both cell halves. The chain is Segregation and condensation protein B from Geobacillus thermodenitrificans (strain NG80-2).